We begin with the raw amino-acid sequence, 177 residues long: Myosin regulatory light chain 2 (177 aa).

A compositionally biased stretch (basic residues) spans 1 to 16; the sequence is MSRKSGSRSSSKRSKK. The disordered stretch occupies residues 1 to 24; that stretch reads MSRKSGSRSSSKRSKKSGGGSNVF. IgE-binding epitope stretches follow at residues 13–30, 22–48, 49–66, 58–90, 79–99, and 118–141; these read RSKK…FTQR, NVFD…DKDG, VIGK…GRIA, TFDE…LLNM, PAPI…TGES, and NIDC…QEAD. One can recognise an EF-hand 1 domain in the interval 30-65; sequence RQVAEFKEGFQLMDRDKDGVIGKTDLRGTFDEIGRI. Ca(2+) contacts are provided by aspartate 43, aspartate 45, aspartate 47, and aspartate 54. The 36-residue stretch at 135–170 folds into the EF-hand 2 domain; that stretch reads FSSQEADDALDQMDIDDGGKIDVQGVIQMLTAGGGD.

Myosin is a hexamer of 2 heavy chains and 4 light chains. Expressed in tail muscle (at protein level).

This Penaeus vannamei (Whiteleg shrimp) protein is Myosin regulatory light chain 2.